The primary structure comprises 124 residues: Small ribosomal subunit protein uS13c (124 aa).

The interval 100-124 (GQRTRTNARTRKGKVKTAVAKKKGR) is disordered. Positions 101-124 (QRTRTNARTRKGKVKTAVAKKKGR) are enriched in basic residues.

It belongs to the universal ribosomal protein uS13 family. Part of the 30S ribosomal subunit.

The protein resides in the plastid. Its subcellular location is the chloroplast. Its function is as follows. Located at the top of the head of the 30S subunit, it contacts several helices of the 16S rRNA. The protein is Small ribosomal subunit protein uS13c of Emiliania huxleyi (Coccolithophore).